The primary structure comprises 419 residues: Tyrosine--tRNA ligase (419 aa).

Residue Tyr-34 coordinates L-tyrosine. A 'HIGH' region motif is present at residues Pro-39 to His-48. Positions 168 and 172 each coordinate L-tyrosine. Residues Lys-230–Ser-234 carry the 'KMSKS' region motif. Lys-233 is a binding site for ATP. An S4 RNA-binding domain is found at Ala-352–Tyr-418.

The protein belongs to the class-I aminoacyl-tRNA synthetase family. TyrS type 1 subfamily. In terms of assembly, homodimer.

It is found in the cytoplasm. The enzyme catalyses tRNA(Tyr) + L-tyrosine + ATP = L-tyrosyl-tRNA(Tyr) + AMP + diphosphate + H(+). Catalyzes the attachment of tyrosine to tRNA(Tyr) in a two-step reaction: tyrosine is first activated by ATP to form Tyr-AMP and then transferred to the acceptor end of tRNA(Tyr). The chain is Tyrosine--tRNA ligase from Listeria monocytogenes serotype 4b (strain F2365).